The following is a 326-amino-acid chain: Neuferricin homolog (326 aa).

An N-terminal signal peptide occupies residues 1–34 (MDKNRRRTDDAGLMTKTLAGIAALVFFLSFICSS). The Cytochrome b5 heme-binding domain occupies 98–197 (KHVFTPEQLH…KEYPLVGVVA (100 aa)).

The protein belongs to the cytochrome b5 family. MAPR subfamily.

The protein resides in the secreted. Heme-binding protein. In Caenorhabditis elegans, this protein is Neuferricin homolog (tag-131).